A 106-amino-acid chain; its full sequence is NADH-quinone oxidoreductase subunit K (106 aa).

3 helical membrane passes run 8–28 (IGIE…IFGV), 35–55 (IIMF…FVAF), and 66–86 (VFVF…LAIL).

This sequence belongs to the complex I subunit 4L family. In terms of assembly, NDH-1 is composed of 14 different subunits. Subunits NuoA, H, J, K, L, M, N constitute the membrane sector of the complex.

The protein localises to the cell inner membrane. It catalyses the reaction a quinone + NADH + 5 H(+)(in) = a quinol + NAD(+) + 4 H(+)(out). Functionally, NDH-1 shuttles electrons from NADH, via FMN and iron-sulfur (Fe-S) centers, to quinones in the respiratory chain. The immediate electron acceptor for the enzyme in this species is believed to be a menaquinone. Couples the redox reaction to proton translocation (for every two electrons transferred, four hydrogen ions are translocated across the cytoplasmic membrane), and thus conserves the redox energy in a proton gradient. The sequence is that of NADH-quinone oxidoreductase subunit K from Flavobacterium psychrophilum (strain ATCC 49511 / DSM 21280 / CIP 103535 / JIP02/86).